The primary structure comprises 379 residues: Protein PatA (379 aa).

The disordered stretch occupies residues Arg181–Asn226. The span at Ser186–Pro212 shows a compositional bias: polar residues. A Response regulatory domain is found at Thr262–Ile378. Asp313 bears the 4-aspartylphosphate mark.

It localises to the cell septum. Controls heterocyst pattern formation. Required for the differentiation of intercalary heterocysts but not for terminal heterocysts. This Nostoc sp. (strain PCC 7120 / SAG 25.82 / UTEX 2576) protein is Protein PatA (patA).